Here is a 427-residue protein sequence, read N- to C-terminus: Enolase (427 aa).

Q163 lines the (2R)-2-phosphoglycerate pocket. E205 (proton donor) is an active-site residue. Positions 242, 285, and 312 each coordinate Mg(2+). The (2R)-2-phosphoglycerate site is built by K337, R366, S367, and K388. The Proton acceptor role is filled by K337.

This sequence belongs to the enolase family. It depends on Mg(2+) as a cofactor.

It is found in the cytoplasm. It localises to the secreted. The protein resides in the cell surface. The catalysed reaction is (2R)-2-phosphoglycerate = phosphoenolpyruvate + H2O. The protein operates within carbohydrate degradation; glycolysis; pyruvate from D-glyceraldehyde 3-phosphate: step 4/5. Catalyzes the reversible conversion of 2-phosphoglycerate (2-PG) into phosphoenolpyruvate (PEP). It is essential for the degradation of carbohydrates via glycolysis. This is Enolase from Bradyrhizobium sp. (strain BTAi1 / ATCC BAA-1182).